The following is an 88-amino-acid chain: Small ribosomal subunit protein bS20 (88 aa).

A disordered region spans residues 1–25 (MANSAQARKRARQATKARAHNASLR). Residues 7–19 (ARKRARQATKARA) are compositionally biased toward basic residues.

Belongs to the bacterial ribosomal protein bS20 family.

Its function is as follows. Binds directly to 16S ribosomal RNA. In Azoarcus sp. (strain BH72), this protein is Small ribosomal subunit protein bS20.